Here is a 429-residue protein sequence, read N- to C-terminus: Glutamyl-tRNA reductase (429 aa).

Residues 50–53, serine 108, 113–115, and glutamine 119 each bind substrate; these read TCNR and EPQ. Cysteine 51 (nucleophile) is an active-site residue. 188–193 contacts NADP(+); that stretch reads GAGEMI.

It belongs to the glutamyl-tRNA reductase family. In terms of assembly, homodimer.

It carries out the reaction (S)-4-amino-5-oxopentanoate + tRNA(Glu) + NADP(+) = L-glutamyl-tRNA(Glu) + NADPH + H(+). The protein operates within porphyrin-containing compound metabolism; protoporphyrin-IX biosynthesis; 5-aminolevulinate from L-glutamyl-tRNA(Glu): step 1/2. In terms of biological role, catalyzes the NADPH-dependent reduction of glutamyl-tRNA(Glu) to glutamate 1-semialdehyde (GSA). In Polaromonas naphthalenivorans (strain CJ2), this protein is Glutamyl-tRNA reductase.